Reading from the N-terminus, the 478-residue chain is Alpha-1,3-mannosyl-glycoprotein 4-beta-N-acetylglucosaminyltransferase C (478 aa).

Residues 1–23 are Cytoplasmic-facing; sequence MFKFHQMKHIFEILDKMRCLRKR. The helical; Signal-anchor for type II membrane protein transmembrane segment at 24 to 44 threads the bilayer; sequence STVSFLGVLVIFLLFMNLYIE. Residues 45–478 lie on the Lumenal side of the membrane; sequence DSYVLEGDKQ…IIRSISIWTS (434 aa). N-linked (GlcNAc...) asparagine glycosylation is found at N84 and N215.

Belongs to the glycosyltransferase 54 family. It depends on a divalent metal cation as a cofactor.

It localises to the golgi apparatus membrane. It catalyses the reaction N(4)-{beta-D-GlcNAc-(1-&gt;2)-alpha-D-Man-(1-&gt;3)-[beta-D-GlcNAc-(1-&gt;2)-alpha-D-Man-(1-&gt;6)]-beta-D-Man-(1-&gt;4)-beta-D-GlcNAc-(1-&gt;4)-beta-D-GlcNAc}-L-asparaginyl-[protein] + UDP-N-acetyl-alpha-D-glucosamine = N(4)-{beta-D-GlcNAc-(1-&gt;2)-[beta-D-GlcNAc-(1-&gt;4)]-alpha-D-Man-(1-&gt;3)-[beta-D-GlcNAc-(1-&gt;2)-alpha-D-Man-(1-&gt;6)]-beta-D-Man-(1-&gt;4)-beta-D-GlcNAc-(1-&gt;4)-beta-D-GlcNAc}-L-asparaginyl-[protein] + UDP + H(+). It participates in protein modification; protein glycosylation. In terms of biological role, glycosyltransferase that participates in the transfer of N-acetylglucosamine (GlcNAc) to the core mannose residues of N-linked glycans. Catalyzes the formation of the GlcNAcbeta1-4 branch on the GlcNAcbeta1-2Manalpha1-3 arm of the core structure of N-linked glycans. Essential for the production of tri- and tetra-antennary N-linked sugar chains. Does not catalyze the transfer of GlcNAc to the Manalpha1-6 arm to form GlcNAcBeta1-4Manalpha1-6 linkage ('GnT-VI' activity). This is Alpha-1,3-mannosyl-glycoprotein 4-beta-N-acetylglucosaminyltransferase C (MGAT4C) from Macaca fascicularis (Crab-eating macaque).